The chain runs to 866 residues: DNA replication licensing factor MCM4 (866 aa).

3 disordered regions span residues 1–67, 81–107, and 124–145; these read MSSP…TSPA, SPLN…TPLR, and GGGS…PVSE. 2 stretches are compositionally biased toward polar residues: residues 47–63 and 81–93; these read DNIS…SLPA and SPLN…SMGS. Ser55 and Ser81 each carry phosphoserine. At Thr87 the chain carries Phosphothreonine. In terms of domain architecture, MCM spans 460–669; that stretch reads IYDRLARAIA…FDKRLASHLV (210 aa). 512–519 is a binding site for ATP; the sequence is GDPGTSKS. The Arginine finger motif lies at 644 to 647; that stretch reads SRFD.

Belongs to the MCM family. Component of the Mcm2-7 complex. The complex forms a toroidal hexameric ring with the proposed subunit order Mcm2-Mcm6-Mcm4-Mcm7-Mcm3-Mcm5. In terms of processing, phosphorylated by the catalytic component of the Dbf4-dependent kinase (DDK) complex Cdc7.

The protein resides in the nucleus. It carries out the reaction ATP + H2O = ADP + phosphate + H(+). In terms of biological role, acts as a component of the Mcm2-7 complex (Mcm complex) which is the putative replicative helicase essential for 'once per cell cycle' DNA replication initiation and elongation in eukaryotic cells. The active ATPase sites in the Mcm2-7 ring are formed through the interaction surfaces of two neighboring subunits such that a critical structure of a conserved arginine finger motif is provided in trans relative to the ATP-binding site of the Walker A box of the adjacent subunit. The six ATPase active sites, however, are likely to contribute differentially to the complex helicase activity. Required for DNA replication and cell proliferation. Essential role in mitotic DNA replication but not in endoreplication. The chain is DNA replication licensing factor MCM4 (dpa) from Drosophila melanogaster (Fruit fly).